The chain runs to 127 residues: Fluoride-specific ion channel FluC (127 aa).

The next 4 helical transmembrane spans lie at 4 to 24 (FSIL…RYLV), 38 to 58 (YGTL…IAAF), 71 to 91 (VIGL…MDNV), and 104 to 124 (LNIL…FQLL). Na(+) is bound by residues G78 and T81.

It belongs to the fluoride channel Fluc/FEX (TC 1.A.43) family.

It localises to the cell inner membrane. The catalysed reaction is fluoride(in) = fluoride(out). Its activity is regulated as follows. Na(+) is not transported, but it plays an essential structural role and its presence is essential for fluoride channel function. Functionally, fluoride-specific ion channel. Important for reducing fluoride concentration in the cell, thus reducing its toxicity. The sequence is that of Fluoride-specific ion channel FluC from Vibrio parahaemolyticus serotype O3:K6 (strain RIMD 2210633).